Here is a 302-residue protein sequence, read N- to C-terminus: Pantothenate synthetase (302 aa).

30-37 lines the ATP pocket; the sequence is MGALHGGH. Residue His37 is the Proton donor of the active site. Gln61 is a (R)-pantoate binding site. Gln61 provides a ligand contact to beta-alanine. Position 147 to 150 (147 to 150) interacts with ATP; that stretch reads GEKD. Gln153 serves as a coordination point for (R)-pantoate. Residues Val176 and 184-187 each bind ATP; that span reads KSSR.

This sequence belongs to the pantothenate synthetase family. In terms of assembly, homodimer.

It is found in the cytoplasm. It carries out the reaction (R)-pantoate + beta-alanine + ATP = (R)-pantothenate + AMP + diphosphate + H(+). It participates in cofactor biosynthesis; (R)-pantothenate biosynthesis; (R)-pantothenate from (R)-pantoate and beta-alanine: step 1/1. In terms of biological role, catalyzes the condensation of pantoate with beta-alanine in an ATP-dependent reaction via a pantoyl-adenylate intermediate. This Shouchella clausii (strain KSM-K16) (Alkalihalobacillus clausii) protein is Pantothenate synthetase.